The chain runs to 556 residues: Dihydroxy-acid dehydratase (556 aa).

Residue cysteine 47 coordinates [2Fe-2S] cluster. Aspartate 79 contacts Mg(2+). Cysteine 120 serves as a coordination point for [2Fe-2S] cluster. Aspartate 121 and lysine 122 together coordinate Mg(2+). Lysine 122 carries the N6-carboxylysine modification. Cysteine 192 contacts [2Fe-2S] cluster. Glutamate 444 serves as a coordination point for Mg(2+). Serine 470 acts as the Proton acceptor in catalysis.

This sequence belongs to the IlvD/Edd family. Homodimer. The cofactor is [2Fe-2S] cluster. It depends on Mg(2+) as a cofactor.

It catalyses the reaction (2R)-2,3-dihydroxy-3-methylbutanoate = 3-methyl-2-oxobutanoate + H2O. The catalysed reaction is (2R,3R)-2,3-dihydroxy-3-methylpentanoate = (S)-3-methyl-2-oxopentanoate + H2O. It functions in the pathway amino-acid biosynthesis; L-isoleucine biosynthesis; L-isoleucine from 2-oxobutanoate: step 3/4. Its pathway is amino-acid biosynthesis; L-valine biosynthesis; L-valine from pyruvate: step 3/4. Functionally, functions in the biosynthesis of branched-chain amino acids. Catalyzes the dehydration of (2R,3R)-2,3-dihydroxy-3-methylpentanoate (2,3-dihydroxy-3-methylvalerate) into 2-oxo-3-methylpentanoate (2-oxo-3-methylvalerate) and of (2R)-2,3-dihydroxy-3-methylbutanoate (2,3-dihydroxyisovalerate) into 2-oxo-3-methylbutanoate (2-oxoisovalerate), the penultimate precursor to L-isoleucine and L-valine, respectively. The chain is Dihydroxy-acid dehydratase from Prochlorococcus marinus (strain MIT 9313).